Here is a 195-residue protein sequence, read N- to C-terminus: Probable cobalt-precorrin-6B C(15)-methyltransferase (decarboxylating) (195 aa).

S-adenosyl-L-methionine is bound by residues T24, 48-52, D72, and A101; that span reads GCGTG.

It belongs to the methyltransferase superfamily. Archaeal-type CbiT family.

The enzyme catalyses Co-precorrin-6B + S-adenosyl-L-methionine = Co-precorrin-7 + S-adenosyl-L-homocysteine + CO2. It functions in the pathway cofactor biosynthesis; adenosylcobalamin biosynthesis; cob(II)yrinate a,c-diamide from sirohydrochlorin (anaerobic route): step 8/10. Catalyzes the methylation of C-15 in cobalt-precorrin-6B followed by the decarboxylation of C-12 to form cobalt-precorrin-7. This chain is Probable cobalt-precorrin-6B C(15)-methyltransferase (decarboxylating), found in Pyrobaculum calidifontis (strain DSM 21063 / JCM 11548 / VA1).